Here is a 215-residue protein sequence, read N- to C-terminus: Small ribosomal subunit protein uS3 (215 aa).

Residues Leu-38–Arg-106 form the KH type-2 domain.

Belongs to the universal ribosomal protein uS3 family. As to quaternary structure, part of the 30S ribosomal subunit. Forms a tight complex with proteins S10 and S14.

In terms of biological role, binds the lower part of the 30S subunit head. Binds mRNA in the 70S ribosome, positioning it for translation. The protein is Small ribosomal subunit protein uS3 of Desulforapulum autotrophicum (strain ATCC 43914 / DSM 3382 / VKM B-1955 / HRM2) (Desulfobacterium autotrophicum).